The primary structure comprises 308 residues: MAMAETPVPKKGDKTKVAAERRGGWLSRIAPGVRGAFAKRETPENLWVKCPDTGEMIYRSDLEAALWVTPAGRHMRIGPELRFKFTFDDGEHEVLPTPAVFEDPLRFSDGKPYKERLAAARKATGEQDAMAIGYGKVGGAPAVVLVQDFAFMGGSLGMAAGEGFIAAAEAAIARQVPLVAFTAAGGARMQEGALSLMQMARTTLAINMLKDAGLPYVVVLTDPTTGGVTASYAMLGDVHLAEPGALIGFAGPRVIEQTIRETLPPGFQRSEYLVEKGMVDRVTPRKELPAVLGSILGTLMMGRGLKAA.

In terms of domain architecture, CoA carboxyltransferase N-terminal spans 46 to 308; sequence LWVKCPDTGE…LMMGRGLKAA (263 aa).

Belongs to the AccD/PCCB family. Acetyl-CoA carboxylase is a heterohexamer composed of biotin carboxyl carrier protein (AccB), biotin carboxylase (AccC) and two subunits each of ACCase subunit alpha (AccA) and ACCase subunit beta (AccD).

It localises to the cytoplasm. The enzyme catalyses N(6)-carboxybiotinyl-L-lysyl-[protein] + acetyl-CoA = N(6)-biotinyl-L-lysyl-[protein] + malonyl-CoA. It functions in the pathway lipid metabolism; malonyl-CoA biosynthesis; malonyl-CoA from acetyl-CoA: step 1/1. Its function is as follows. Component of the acetyl coenzyme A carboxylase (ACC) complex. Biotin carboxylase (BC) catalyzes the carboxylation of biotin on its carrier protein (BCCP) and then the CO(2) group is transferred by the transcarboxylase to acetyl-CoA to form malonyl-CoA. In Caulobacter sp. (strain K31), this protein is Acetyl-coenzyme A carboxylase carboxyl transferase subunit beta.